The primary structure comprises 487 residues: Bifunctional protein GlmU (487 aa).

Positions 1–235 are pyrophosphorylase; sequence MSHSPTPLAA…PEEASGVNDR (235 aa). Residues 13-16, K27, Q82, 87-88, 110-112, G147, E162, N177, and N233 each bind UDP-N-acetyl-alpha-D-glucosamine; these read LAAG, GT, and SGD. Residue D112 coordinates Mg(2+). N233 lines the Mg(2+) pocket. A linker region spans residues 236–256; sequence EELARAGRVLLRRRASELMRS. The N-acetyltransferase stretch occupies residues 257-487; the sequence is GVTIEDPERF…ADSPRGGRAS (231 aa). UDP-N-acetyl-alpha-D-glucosamine-binding residues include R339 and K357. H369 functions as the Proton acceptor in the catalytic mechanism. UDP-N-acetyl-alpha-D-glucosamine is bound by residues Y372 and N383. Residues A386, 392-393, S411, A429, and R446 contribute to the acetyl-CoA site; that span reads NY. The segment at 453-487 is disordered; that stretch reads EGWVARRKAEAQNKGAAEAAPAPSPADSPRGGRAS. The span at 468-481 shows a compositional bias: low complexity; it reads AAEAAPAPSPADSP.

The protein in the N-terminal section; belongs to the N-acetylglucosamine-1-phosphate uridyltransferase family. This sequence in the C-terminal section; belongs to the transferase hexapeptide repeat family. As to quaternary structure, homotrimer. Requires Mg(2+) as cofactor.

The protein resides in the cytoplasm. The enzyme catalyses alpha-D-glucosamine 1-phosphate + acetyl-CoA = N-acetyl-alpha-D-glucosamine 1-phosphate + CoA + H(+). The catalysed reaction is N-acetyl-alpha-D-glucosamine 1-phosphate + UTP + H(+) = UDP-N-acetyl-alpha-D-glucosamine + diphosphate. It functions in the pathway nucleotide-sugar biosynthesis; UDP-N-acetyl-alpha-D-glucosamine biosynthesis; N-acetyl-alpha-D-glucosamine 1-phosphate from alpha-D-glucosamine 6-phosphate (route II): step 2/2. It participates in nucleotide-sugar biosynthesis; UDP-N-acetyl-alpha-D-glucosamine biosynthesis; UDP-N-acetyl-alpha-D-glucosamine from N-acetyl-alpha-D-glucosamine 1-phosphate: step 1/1. The protein operates within bacterial outer membrane biogenesis; LPS lipid A biosynthesis. Functionally, catalyzes the last two sequential reactions in the de novo biosynthetic pathway for UDP-N-acetylglucosamine (UDP-GlcNAc). The C-terminal domain catalyzes the transfer of acetyl group from acetyl coenzyme A to glucosamine-1-phosphate (GlcN-1-P) to produce N-acetylglucosamine-1-phosphate (GlcNAc-1-P), which is converted into UDP-GlcNAc by the transfer of uridine 5-monophosphate (from uridine 5-triphosphate), a reaction catalyzed by the N-terminal domain. The polypeptide is Bifunctional protein GlmU (Anaeromyxobacter sp. (strain Fw109-5)).